The sequence spans 211 residues: ATP phosphoribosyltransferase (211 aa).

Belongs to the ATP phosphoribosyltransferase family. Short subfamily. As to quaternary structure, heteromultimer composed of HisG and HisZ subunits.

It is found in the cytoplasm. It carries out the reaction 1-(5-phospho-beta-D-ribosyl)-ATP + diphosphate = 5-phospho-alpha-D-ribose 1-diphosphate + ATP. The protein operates within amino-acid biosynthesis; L-histidine biosynthesis; L-histidine from 5-phospho-alpha-D-ribose 1-diphosphate: step 1/9. Catalyzes the condensation of ATP and 5-phosphoribose 1-diphosphate to form N'-(5'-phosphoribosyl)-ATP (PR-ATP). Has a crucial role in the pathway because the rate of histidine biosynthesis seems to be controlled primarily by regulation of HisG enzymatic activity. The chain is ATP phosphoribosyltransferase from Pseudomonas fluorescens (strain ATCC BAA-477 / NRRL B-23932 / Pf-5).